Here is a 353-residue protein sequence, read N- to C-terminus: Photosystem II D2 protein (353 aa).

Thr-2 is modified (N-acetylthreonine). Phosphothreonine is present on Thr-2. A helical membrane pass occupies residues 41 to 61 (CAYFALGGWFTGTTFVTSWYT). Chlorophyll a is bound at residue His-118. Residues 125-141 (GFMLRQFELARSVQLRP) form a helical membrane-spanning segment. Pheophytin a-binding residues include Gln-130 and Asn-143. A helical membrane pass occupies residues 153–166 (VFISVFFIYPLGQS). His-198 is a binding site for chlorophyll a. A helical transmembrane segment spans residues 208 to 228 (AALLCAIHGATVENTLFEDGD). Residues His-215 and Phe-262 each contribute to the a plastoquinone site. His-215 is a binding site for Fe cation. His-269 provides a ligand contact to Fe cation. Residues 279–295 (GLWMSALGVVGLALNLR) traverse the membrane as a helical segment.

The protein belongs to the reaction center PufL/M/PsbA/D family. PSII is composed of 1 copy each of membrane proteins PsbA, PsbB, PsbC, PsbD, PsbE, PsbF, PsbH, PsbI, PsbJ, PsbK, PsbL, PsbM, PsbT, PsbX, PsbY, PsbZ, Psb30/Ycf12, at least 3 peripheral proteins of the oxygen-evolving complex and a large number of cofactors. It forms dimeric complexes. The D1/D2 heterodimer binds P680, chlorophylls that are the primary electron donor of PSII, and subsequent electron acceptors. It shares a non-heme iron and each subunit binds pheophytin, quinone, additional chlorophylls, carotenoids and lipids. There is also a Cl(-1) ion associated with D1 and D2, which is required for oxygen evolution. The PSII complex binds additional chlorophylls, carotenoids and specific lipids. is required as a cofactor.

It localises to the plastid membrane. It catalyses the reaction 2 a plastoquinone + 4 hnu + 2 H2O = 2 a plastoquinol + O2. In terms of biological role, photosystem II (PSII) is a light-driven water:plastoquinone oxidoreductase that uses light energy to abstract electrons from H(2)O, generating O(2) and a proton gradient subsequently used for ATP formation. It consists of a core antenna complex that captures photons, and an electron transfer chain that converts photonic excitation into a charge separation. The D1/D2 (PsbA/PsbD) reaction center heterodimer binds P680, the primary electron donor of PSII as well as several subsequent electron acceptors. D2 is needed for assembly of a stable PSII complex. The sequence is that of Photosystem II D2 protein from Cuscuta reflexa (Southern Asian dodder).